Consider the following 554-residue polypeptide: Polyamine aminopropyltransferase 2 (554 aa).

A compositionally biased stretch (pro residues) spans 1–13; it reads MIEPHAPAPPGSP. Residues 1-20 form a disordered region; the sequence is MIEPHAPAPPGSPPSWGGPC. A run of 6 helical transmembrane segments spans residues 37–57, 69–89, 106–126, 139–159, 184–204, and 206–226; these read FLVLAGVFVCAACGLVYELEL, VTQASVVLSVMVFAMGLGSLA, AALALVGGSSAMLLYAVFAWT, ILLVAFSLAIGVLIGAEVPLL, VGALVGGLAFPFVLLPFLGQL, and GALLTGTVNAVVGAALVLGLF. Residues 235–516 are spermidine synthase; it reads RWLLLTANAV…RTAPAPRLDP (282 aa). Residues 247–492 enclose the PABS domain; it reads ALLATATVLA…SVPGPRRAAA (246 aa). Residue Q281 participates in S-methyl-5'-thioadenosine binding. Residues H313 and D335 each coordinate spermidine. Residues E355 and 389–390 each bind S-methyl-5'-thioadenosine; that span reads DA. The active-site Proton acceptor is the D408. Residues 476 to 495 form a disordered region; the sequence is DTGPGPGSVPGPRRAAAGPP. Positions 485 to 495 are enriched in low complexity; that stretch reads PGPRRAAAGPP.

The protein belongs to the spermidine/spermine synthase family. Homodimer or homotetramer.

The protein localises to the cell membrane. The catalysed reaction is S-adenosyl 3-(methylsulfanyl)propylamine + putrescine = S-methyl-5'-thioadenosine + spermidine + H(+). Its pathway is amine and polyamine biosynthesis; spermidine biosynthesis; spermidine from putrescine: step 1/1. Its function is as follows. Catalyzes the irreversible transfer of a propylamine group from the amino donor S-adenosylmethioninamine (decarboxy-AdoMet) to putrescine (1,4-diaminobutane) to yield spermidine. The protein is Polyamine aminopropyltransferase 2 of Streptomyces coelicolor (strain ATCC BAA-471 / A3(2) / M145).